The following is a 421-amino-acid chain: Serine--tRNA ligase (421 aa).

231–233 (TAE) provides a ligand contact to L-serine. 262–264 (RRE) contributes to the ATP binding site. Residue glutamate 285 coordinates L-serine. ATP is bound at residue 349–352 (EISS). Serine 384 is a binding site for L-serine.

The protein belongs to the class-II aminoacyl-tRNA synthetase family. Type-1 seryl-tRNA synthetase subfamily. Homodimer. The tRNA molecule binds across the dimer.

Its subcellular location is the cytoplasm. The catalysed reaction is tRNA(Ser) + L-serine + ATP = L-seryl-tRNA(Ser) + AMP + diphosphate + H(+). It catalyses the reaction tRNA(Sec) + L-serine + ATP = L-seryl-tRNA(Sec) + AMP + diphosphate + H(+). It functions in the pathway aminoacyl-tRNA biosynthesis; selenocysteinyl-tRNA(Sec) biosynthesis; L-seryl-tRNA(Sec) from L-serine and tRNA(Sec): step 1/1. In terms of biological role, catalyzes the attachment of serine to tRNA(Ser). Is also able to aminoacylate tRNA(Sec) with serine, to form the misacylated tRNA L-seryl-tRNA(Sec), which will be further converted into selenocysteinyl-tRNA(Sec). This Hydrogenobaculum sp. (strain Y04AAS1) protein is Serine--tRNA ligase.